The primary structure comprises 628 residues: Modular serine protease (628 aa).

The first 25 residues, 1–25, serve as a signal peptide directing secretion; that stretch reads MQLISFLSNPLFFCALLLKFRTIFA. 4 LDL-receptor class A domains span residues 26 to 64, 69 to 107, 122 to 163, and 166 to 204; these read ACDS…LTCV, HCTK…LRCG, NCKE…ELCG, and ECPA…LLCN. Cystine bridges form between C27/C39, C34/C52, C46/C63, C70/C82, C77/C95, C89/C106, C123/C135, C130/C149, C143/C162, C167/C179, C174/C192, and C186/C203. An N-linked (GlcNAc...) asparagine glycan is attached at N36. N-linked (GlcNAc...) asparagine glycosylation is present at N204. Sushi domains lie at 222 to 285 and 300 to 356; these read LGCP…KCVK and ALCT…RCEQ. Intrachain disulfides connect C224/C270, C256/C283, C302/C341, and C326/C354. The 253-residue stretch at 369–621 folds into the Peptidase S1 domain; sequence SSGGYTINNT…FEDMILNAMN (253 aa). N-linked (GlcNAc...) asparagine glycosylation is present at N376. The cysteines at positions 399 and 415 are disulfide-linked. Catalysis depends on charge relay system residues H414, D472, and S563. N621 carries an N-linked (GlcNAc...) asparagine glycan.

This sequence belongs to the peptidase S1 family. May be proteolytically cleaved via an autocatalytic mechanism.

The protein resides in the secreted. Serine protease that plays a key role in innate immunity by activating the Toll pathway in response to infection with Gram-positive bacteria and fungi. During Gram-positive infection, acts downstream of PGRP-SA and upstream of Grass and Spz, and therefore appears to function in a pathway that links detection of Gram-positive lysine-type peptidoglycans to Toll activation. Functions in a separate pathway to the psh-mediated activation of the Toll pathway. This chain is Modular serine protease, found in Drosophila melanogaster (Fruit fly).